The chain runs to 309 residues: tRNA dimethylallyltransferase (309 aa).

10–17 (GPTASGKT) is an ATP binding site. Residue 12-17 (TASGKT) participates in substrate binding. Interaction with substrate tRNA stretches follow at residues 35–38 (DSAL) and 240–245 (RCVGYR).

The protein belongs to the IPP transferase family. As to quaternary structure, monomer. It depends on Mg(2+) as a cofactor.

It carries out the reaction adenosine(37) in tRNA + dimethylallyl diphosphate = N(6)-dimethylallyladenosine(37) in tRNA + diphosphate. Functionally, catalyzes the transfer of a dimethylallyl group onto the adenine at position 37 in tRNAs that read codons beginning with uridine, leading to the formation of N6-(dimethylallyl)adenosine (i(6)A). This Baumannia cicadellinicola subsp. Homalodisca coagulata protein is tRNA dimethylallyltransferase.